The chain runs to 521 residues: GMP synthase [glutamine-hydrolyzing] (521 aa).

The 195-residue stretch at S10–D204 folds into the Glutamine amidotransferase type-1 domain. C87 serves as the catalytic Nucleophile. Catalysis depends on residues H178 and E180. The GMPS ATP-PPase domain occupies W205–R396. S232 to S238 lines the ATP pocket.

As to quaternary structure, homodimer.

It catalyses the reaction XMP + L-glutamine + ATP + H2O = GMP + L-glutamate + AMP + diphosphate + 2 H(+). The protein operates within purine metabolism; GMP biosynthesis; GMP from XMP (L-Gln route): step 1/1. Catalyzes the synthesis of GMP from XMP. In Wolinella succinogenes (strain ATCC 29543 / DSM 1740 / CCUG 13145 / JCM 31913 / LMG 7466 / NCTC 11488 / FDC 602W) (Vibrio succinogenes), this protein is GMP synthase [glutamine-hydrolyzing].